Reading from the N-terminus, the 199-residue chain is ATP-dependent Clp protease proteolytic subunit (199 aa).

The active-site Nucleophile is Ser-97. The active site involves His-122.

The protein belongs to the peptidase S14 family. In terms of assembly, fourteen ClpP subunits assemble into 2 heptameric rings which stack back to back to give a disk-like structure with a central cavity, resembling the structure of eukaryotic proteasomes.

Its subcellular location is the cytoplasm. It carries out the reaction Hydrolysis of proteins to small peptides in the presence of ATP and magnesium. alpha-casein is the usual test substrate. In the absence of ATP, only oligopeptides shorter than five residues are hydrolyzed (such as succinyl-Leu-Tyr-|-NHMec, and Leu-Tyr-Leu-|-Tyr-Trp, in which cleavage of the -Tyr-|-Leu- and -Tyr-|-Trp bonds also occurs).. Cleaves peptides in various proteins in a process that requires ATP hydrolysis. Has a chymotrypsin-like activity. Plays a major role in the degradation of misfolded proteins. The protein is ATP-dependent Clp protease proteolytic subunit of Pelobacter propionicus (strain DSM 2379 / NBRC 103807 / OttBd1).